Consider the following 887-residue polypeptide: 3-hydroxy-3-methylglutaryl-coenzyme A reductase (887 aa).

Topologically, residues 1–9 (MLSRLFRMH) are cytoplasmic. A helical membrane pass occupies residues 10-39 (GLFVASHPWEVIVGTVTLTICMMSMNMFTG). The Lumenal portion of the chain corresponds to 40–56 (NNKICGWNYECPKFEED). A helical transmembrane segment spans residues 57 to 78 (VLSSDIIILTITRCIAILYIYF). Residues 61–218 (DIIILTITRC…MTFFPACVSL (158 aa)) form the SSD domain. Residues 75–78 (YIYF) carry the INSIG-binding motif motif. Residues 79–89 (QFQNLRQLGSK) are Cytoplasmic-facing. K89 is covalently cross-linked (Glycyl lysine isopeptide (Lys-Gly) (interchain with G-Cter in ubiquitin)). A helical transmembrane segment spans residues 90 to 114 (YILGIAGLFTIFSSFVFSTVVIHFL). At 115-123 (DKELTGLNE) the chain is on the lumenal side. A helical membrane pass occupies residues 124–149 (ALPFFLLLIDLSRASALAKFALSSNS). The Cytoplasmic segment spans residues 150–159 (QDEVRENIAR). Residues 160–187 (GMAILGPTFTLDALVECLVIGVGTMSGV) traverse the membrane as a helical segment. Residues 188-191 (RQLE) are Lumenal-facing. The helical transmembrane segment at 192–220 (IMCCFGCMSVLANYFVFMTFFPACVSLVL) threads the bilayer. Residues 221–248 (ELSRESREGRPIWQLSHFARVLEEEENK) are Cytoplasmic-facing. K248 is covalently cross-linked (Glycyl lysine isopeptide (Lys-Gly) (interchain with G-Cter in ubiquitin)). The chain crosses the membrane as a helical span at residues 249 to 275 (PNPVTQRVKMIMSLGLVLVHAHSRWIA). At 276-314 (DPSPQNSTAEQAKVSLGLDEDVSKRIEPSVSLWQFYLSK) the chain is on the lumenal side. The N-linked (GlcNAc...) asparagine glycan is linked to N281. A helical membrane pass occupies residues 315-339 (MISMDIEQVITLSLAFLLAVKYIFF). Over 340–887 (EQAETESTLS…LQGTCTKKAA (548 aa)) the chain is Cytoplasmic. Residues E558, K690, and D766 each act as charge relay system in the active site. H865 functions as the Proton donor in the catalytic mechanism. Phosphoserine is present on S871.

Belongs to the HMG-CoA reductase family. As to quaternary structure, homotetramer. Homodimer. Interacts (via its SSD) with INSIG1; the interaction, accelerated by sterols, leads to the recruitment of HMGCR to AMFR/gp78 for its ubiquitination by the sterol-mediated ERAD pathway. Interacts with UBIAD1. Post-translationally, undergoes sterol-mediated ubiquitination and ER-associated degradation (ERAD). Accumulation of sterols in the endoplasmic reticulum (ER) membrane, triggers binding of the reductase to the ER membrane protein INSIG1 or INSIG2. The INSIG1 binding leads to the recruitment of the ubiquitin ligase, AMFR/gp78, RNF139 or RNF145, initiating ubiquitination of the reductase. The ubiquitinated reductase is then extracted from the ER membrane and delivered to cytosolic 26S proteosomes by a mechanism probably mediated by the ATPase Valosin-containing protein VCP/p97. The INSIG2-binding leads to the recruitment of the ubiquitin ligase RNF139, initiating ubiquitination of the reductase. Lys-248 is the main site of ubiquitination. Ubiquitination is enhanced by the presence of a geranylgeranylated protein. In terms of processing, N-glycosylated. Deglycosylated by NGLY1 on release from the endoplasmic reticulum (ER) in a sterol-mediated manner. Phosphorylated. Phosphorylation at Ser-871 reduces the catalytic activity.

It localises to the endoplasmic reticulum membrane. It is found in the peroxisome membrane. The catalysed reaction is (R)-mevalonate + 2 NADP(+) + CoA = (3S)-3-hydroxy-3-methylglutaryl-CoA + 2 NADPH + 2 H(+). The protein operates within metabolic intermediate biosynthesis; (R)-mevalonate biosynthesis; (R)-mevalonate from acetyl-CoA: step 3/3. With respect to regulation, regulated by a negative feedback mechanism through sterols and non-sterol metabolites derived from mevalonate. Phosphorylation at Ser-871 down-regulates the catalytic activity. In terms of biological role, catalyzes the conversion of (3S)-hydroxy-3-methylglutaryl-CoA (HMG-CoA) to mevalonic acid, the rate-limiting step in the synthesis of cholesterol and other isoprenoids, thus plays a critical role in cellular cholesterol homeostasis. This is 3-hydroxy-3-methylglutaryl-coenzyme A reductase (Hmgcr) from Mus musculus (Mouse).